The sequence spans 593 residues: F-box/LRR-repeat protein 17 (593 aa).

Positions 120–177 (DLDLQLDTDIVQPGRFHAVGLWEVLKRLPPSSLLMAARVCKGWRETSRKMWKAAEELR) constitute an F-box domain. LRR repeat units follow at residues 178-206 (IRVPERAQIGYIGSLLQKCPRLIRLSLKI), 207-232 (ESDFDATTLACIAFSCPNLEVLEITT), 237-262 (VNRISGDELSRFVANKRGLTSLKMEG), 276-304 (LSTLWLSDLHSLSKMIFNCPNLTEISLEF), 335-361 (SLKLSHTVVLSLTAVNFRYLRMLSLVL), 362-387 (GINITDASVAAISSGYKNLELLDLSG), 414-439 (CPNITSSGIQFATAQLPLLELMDCGM), 477-502 (LSLWGCSSLDALFLNCPELMDLNLNL), and 503-525 (CSNLHPESLVLQCPKLQLVYASG).

As to quaternary structure, part of a SCF (ASK-cullin-F-box) protein ligase complex. Interacts with SKP1A/ASK1, KRP4, KRP6 and KRP7. Expressed in developing pollen.

It is found in the nucleus. The protein operates within protein modification; protein ubiquitination. Its function is as follows. Essential protein for male fertility. Component of the SCF(ASK-cullin-F-box) E3 ubiquitin ligase complex SCF(FBL17), which mediates the ubiquitination and subsequent proteasomal degradation of target proteins. Enables the switch in cell cycle control leading to male germ cell lineage formation from microspores after meiosis. Targets CDKA-1 inhibitors the degradation specifically in male germ cells (e.g. KRP6 and KRP7) and thus enables CDKA-1 activation and germ cell S-phase progression. Promotes twin sperm cell production and double fertilization. In Arabidopsis thaliana (Mouse-ear cress), this protein is F-box/LRR-repeat protein 17 (FBL17).